The chain runs to 178 residues: Large ribosomal subunit protein bL25 (178 aa).

It belongs to the bacterial ribosomal protein bL25 family. CTC subfamily. Part of the 50S ribosomal subunit; part of the 5S rRNA/L5/L18/L25 subcomplex. Contacts the 5S rRNA. Binds to the 5S rRNA independently of L5 and L18.

Functionally, this is one of the proteins that binds to the 5S RNA in the ribosome where it forms part of the central protuberance. The protein is Large ribosomal subunit protein bL25 of Helicobacter hepaticus (strain ATCC 51449 / 3B1).